Here is a 140-residue protein sequence, read N- to C-terminus: Small ribosomal subunit protein eS17y (140 aa).

It belongs to the eukaryotic ribosomal protein eS17 family.

This Arabidopsis thaliana (Mouse-ear cress) protein is Small ribosomal subunit protein eS17y (RPS17B).